Reading from the N-terminus, the 103-residue chain is Large ribosomal subunit protein uL24 (103 aa).

The protein belongs to the universal ribosomal protein uL24 family. In terms of assembly, part of the 50S ribosomal subunit.

Functionally, one of two assembly initiator proteins, it binds directly to the 5'-end of the 23S rRNA, where it nucleates assembly of the 50S subunit. Its function is as follows. One of the proteins that surrounds the polypeptide exit tunnel on the outside of the subunit. This Enterococcus faecalis (strain ATCC 700802 / V583) protein is Large ribosomal subunit protein uL24.